Here is a 616-residue protein sequence, read N- to C-terminus: MKENVASMIVFLLLLFLNIRLLKGQSPPGKPFIFKCRSPEKETFTCWWRPGADGGLPTNYTLTYHKEGETITHECPDYKTGGPNSCYFSKKHTSIWTIYIITVNATNQMGSSVSDPRYVDVTYIVEPDPPVNLTLEVKHPEDRKPYLWVKWLPPTLVDVRSGWLTLQYEIRLKPEKAAEWETHFAGQQTQFKILSLYPGQKYLVQVRCKPDHGFWSVWSPESSIQIPNDFTMKDITVWIFVAVLSTIICLIMVWAVALKGYSMVTCIFPPVPGPKIKGFDTHLLEKGKSEELLSAFGCQDFPPTADCEDLLVEFLEVDDSEDQQLMPAHSKEHSGPGMKPTDLDPDNDSGRGSCDSPSLLSEKCEEPQANPSTFHTPEVIEQPEKPKANVTHTWDPQTISLVGKMPYLSVNGSKSSTWPLLQPGQHNTNSPYHNIADMCKLATSLDKIDKDALQSSKTTEAAGEEKATKQREVESSHSKAEQDTGWLLPKEKPPFISPKPLDYVEIHKVNKDGALSLLLKQKENGDQTGKAGTPETSKEYAKVSRVMDNNILVLVQDPGAQNVALFEESTKEAPPSPSQNQAEKDLSSFSTAPSDCRLQQGGLDYLDPACFMHSLH.

The N-terminal stretch at 1-24 (MKENVASMIVFLLLLFLNIRLLKG) is a signal peptide. Topologically, residues 25-234 (QSPPGKPFIF…QIPNDFTMKD (210 aa)) are extracellular. Fibronectin type-III domains lie at 27–128 (PPGK…VEPD) and 129–229 (PPVN…IPND). Cysteines 36 and 46 form a disulfide. N-linked (GlcNAc...) asparagine glycosylation is present at Asn-59. Cys-75 and Cys-86 are disulfide-bonded. Residues Asn-104 and Asn-132 are each glycosylated (N-linked (GlcNAc...) asparagine). Residues Asp-211 and His-212 each coordinate Zn(2+). The WSXWS motif signature appears at 215-219 (WSVWS). A helical membrane pass occupies residues 235–258 (ITVWIFVAVLSTIICLIMVWAVAL). At 259-616 (KGYSMVTCIF…DPACFMHSLH (358 aa)) the chain is on the cytoplasmic side. The short motif at 267–275 (IFPPVPGPK) is the Box 1 motif element. Disordered stretches follow at residues 326-375 (MPAH…STFH), 454-492 (QSSK…PKEK), and 568-593 (ESTK…STAP). Over residues 463 to 482 (GEEKATKQREVESSHSKAEQ) the composition is skewed to basic and acidic residues.

The protein belongs to the type I cytokine receptor family. Type 1 subfamily. In terms of assembly, interacts with SMARCA1. Interacts with NEK3 and VAV2 and this interaction is prolactin-dependent.

It localises to the membrane. Its function is as follows. This is a receptor for the anterior pituitary hormone prolactin. The protein is Prolactin receptor (PRLR) of Oryctolagus cuniculus (Rabbit).